A 272-amino-acid polypeptide reads, in one-letter code: Elongation factor Ts (272 aa).

An involved in Mg(2+) ion dislocation from EF-Tu region spans residues 76–79 (TDFV).

Belongs to the EF-Ts family.

Its subcellular location is the cytoplasm. In terms of biological role, associates with the EF-Tu.GDP complex and induces the exchange of GDP to GTP. It remains bound to the aminoacyl-tRNA.EF-Tu.GTP complex up to the GTP hydrolysis stage on the ribosome. This Corynebacterium urealyticum (strain ATCC 43042 / DSM 7109) protein is Elongation factor Ts.